Here is a 1373-residue protein sequence, read N- to C-terminus: Poly(A) RNA polymerase gld-2 homolog B (1373 aa).

The segment covering 75-91 (NSCHSSNSSSNTSNNNN) has biased composition (low complexity). Disordered regions lie at residues 75-155 (NSCH…QEKQ), 175-340 (SDCK…FWKT), 425-543 (PDST…QQQK), 734-770 (PQQQQQQQLSSHPIPTGTSSHPPPPPPPHMFFHFADG), 802-866 (CGSG…ALGS), and 880-928 (HPLH…PTPV). Positions 96–112 (GQQQQPLHYCNSNNSHS) are enriched in polar residues. Low complexity-rich tracts occupy residues 130–152 (QQQQQPSSFFQRQQQQHQMQMQQ), 180–219 (SDSNNNSTSSSNNNSTISSNNNNTSSASNNNTGSSSSCSN), 228–251 (NENSSSSSSSNNNNISCRNNNTSS), and 274–284 (ESGSSEGAAES). Polar residues-rich tracts occupy residues 295 to 340 (CNSN…FWKT) and 430 to 442 (KSSSNTGGSNMIR). The span at 443–485 (SSSNGNSNFSRHQYGHQSTGSGYQQQQQRYRNAQNVYQQYQHQ) shows a compositional bias: low complexity. Residues 486 to 502 (QQHHAQQHTHPHFRRKH) are compositionally biased toward basic residues. Low complexity-rich tracts occupy residues 735-753 (QQQQQQQLSSHPIPTGTSS) and 819-844 (AGALRPASPALSSSSLGSESQWSGTS). Over residues 855-866 (PSISPTPSALGS) the composition is skewed to polar residues. The span at 880-890 (HPLHQQHPPSH) shows a compositional bias: low complexity. The tract at residues 945 to 1373 (RYLAQARNIE…FAETTAAHVA (429 aa)) is sufficent for interaction with Dcr-2. Mg(2+)-binding residues include D1029 and D1031. Residues 1211–1272 (TLGEHLLGFF…NIEEPFDLSN (62 aa)) form the PAP-associated domain. A compositionally biased stretch (low complexity) spans 1320-1341 (LQQHQQQFEQQLHHPISGQQRS). The segment at 1320–1359 (LQQHQQQFEQQLHHPISGQQRSAGGGGDGANPVPSTLNPD) is disordered.

This sequence belongs to the DNA polymerase type-B-like family. GLD2 subfamily. In terms of assembly, interacts with orb, an RNA-binding protein, generating an ovarian cytoplasmic polyadenylation complex. Interacts (via C-terminus) with Dcr-2. Requires Mg(2+) as cofactor. Mn(2+) serves as cofactor. As to expression, expressed in ovaries. Not expressed in adult males.

It localises to the cytoplasm. It catalyses the reaction RNA(n) + ATP = RNA(n)-3'-adenine ribonucleotide + diphosphate. Cytoplasmic poly(A) RNA polymerase that adds successive AMP monomers to the 3'-end of specific maternal RNAs (bcd, Tl, and tor), forming a poly(A) tail, during late oogenesis and early embryogenesis. In contrast to the canonical nuclear poly(A) RNA polymerase, it only adds poly(A) to selected cytoplasmic mRNAs. Required for localization of mRNAs to both poles of the egg, to recruit or maintain known centrosomal proteins with two types of microtubule organizing centers (MTOCs): the central MTOC that forms between the meiosis II tandem spindles and the centrosomes of the mitotic spindle. Required at the final stage of oogenesis for meiosis I metaphase arrest and for progression beyond this stage. Functions with the RNA-binding protein Dcr-2 to promote cytoplasmic polyadenylation and translational activation of certain mRNAs such as Tl and r2d2. As a consequence, is involved in regulating Toll immune signaling and promoting resistance to fungal infection. The protein is Poly(A) RNA polymerase gld-2 homolog B (wisp) of Drosophila melanogaster (Fruit fly).